The following is a 153-amino-acid chain: Deoxyuridine 5'-triphosphate nucleotidohydrolase (153 aa).

Residues Arg71 to Gly73, Asn84, Thr88 to Asp90, and Lys98 contribute to the substrate site.

Belongs to the dUTPase family. It depends on Mg(2+) as a cofactor.

It carries out the reaction dUTP + H2O = dUMP + diphosphate + H(+). It functions in the pathway pyrimidine metabolism; dUMP biosynthesis; dUMP from dCTP (dUTP route): step 2/2. This enzyme is involved in nucleotide metabolism: it produces dUMP, the immediate precursor of thymidine nucleotides and it decreases the intracellular concentration of dUTP so that uracil cannot be incorporated into DNA. The sequence is that of Deoxyuridine 5'-triphosphate nucleotidohydrolase from Ehrlichia canis (strain Jake).